A 259-amino-acid chain; its full sequence is MSEQRKPCKRGCIHTGVMLYGVLLQGAIPREYMISHQTDVRVNENRVNEQGCFLARKQMYDNSCGAASLLCAAKELGVDKIPQYKGSMSEMTRKSSLDLDNRCERDLYLITSGNYNPRIHKDNIADAGYSMPDKIVMATRLLGLNAYVVEESNIFSQVISFIYPDARDLLIGMGCNIVHQRDVLSSNQRVLEAVAVSFIGVPVGLHWVLCRPDGSYMDPAVGENYSCFSTMELGARRSNSNFIGYTKIGISIVITNEAL.

Active-site residues include Cys-64, His-206, and Asp-218.

The protein localises to the secreted. It is found in the host cytoplasm. Its function is as follows. Virulence factor that eliminates N-myristoyl protein modifications in infected host cells. Acts as a cysteine protease that cleaves the peptide bond between N-myristoylated Gly-2 and Asn-3 of human ARF1, leading to the elimination of the myristoyl group and alteration of protein trafficking in host cell. Could also cleave an array of N-myristoylated host proteins involved in cellular growth, signal transduction, autophagasome maturation and organelle function. This chain is Cysteine protease IpaJ (ipaJ), found in Shigella flexneri.